A 266-amino-acid chain; its full sequence is Large ribosomal subunit protein eL8 (266 aa).

Glycyl lysine isopeptide (Lys-Gly) (interchain with G-Cter in SUMO2) cross-links involve residues lysine 11, lysine 20, and lysine 21. Lysine 34 is subject to N6-acetyllysine. Residue lysine 48 forms a Glycyl lysine isopeptide (Lys-Gly) (interchain with G-Cter in SUMO2) linkage. Lysine 97 is subject to N6-acetyllysine; alternate. A Glycyl lysine isopeptide (Lys-Gly) (interchain with G-Cter in SUMO2); alternate cross-link involves residue lysine 97. Lysine 125 is covalently cross-linked (Glycyl lysine isopeptide (Lys-Gly) (interchain with G-Cter in SUMO2)). Lysine 217 carries the post-translational modification N6-acetyllysine. A Glycyl lysine isopeptide (Lys-Gly) (interchain with G-Cter in SUMO2) cross-link involves residue lysine 245.

Belongs to the eukaryotic ribosomal protein eL8 family. In terms of assembly, component of the large ribosomal subunit. Interacts with CRY1. Interacts with DICER1, AGO2, TARBP2, MOV10 and EIF6; they form a large RNA-induced silencing complex (RISC).

It localises to the cytoplasm. In terms of biological role, component of the large ribosomal subunit. The ribosome is a large ribonucleoprotein complex responsible for the synthesis of proteins in the cell. The chain is Large ribosomal subunit protein eL8 (Rpl7a) from Rattus norvegicus (Rat).